A 434-amino-acid chain; its full sequence is Glutamate-1-semialdehyde 2,1-aminomutase (434 aa).

K273 carries the N6-(pyridoxal phosphate)lysine modification.

This sequence belongs to the class-III pyridoxal-phosphate-dependent aminotransferase family. HemL subfamily. Homodimer. Pyridoxal 5'-phosphate is required as a cofactor.

The protein resides in the cytoplasm. It catalyses the reaction (S)-4-amino-5-oxopentanoate = 5-aminolevulinate. Its pathway is porphyrin-containing compound metabolism; protoporphyrin-IX biosynthesis; 5-aminolevulinate from L-glutamyl-tRNA(Glu): step 2/2. This chain is Glutamate-1-semialdehyde 2,1-aminomutase, found in Polynucleobacter asymbioticus (strain DSM 18221 / CIP 109841 / QLW-P1DMWA-1) (Polynucleobacter necessarius subsp. asymbioticus).